Consider the following 354-residue polypeptide: Methylthioribose-1-phosphate isomerase (354 aa).

Aspartate 246 functions as the Proton donor in the catalytic mechanism.

This sequence belongs to the eIF-2B alpha/beta/delta subunits family. MtnA subfamily.

The protein resides in the cytoplasm. Its subcellular location is the nucleus. It carries out the reaction 5-(methylsulfanyl)-alpha-D-ribose 1-phosphate = 5-(methylsulfanyl)-D-ribulose 1-phosphate. It functions in the pathway amino-acid biosynthesis; L-methionine biosynthesis via salvage pathway; L-methionine from S-methyl-5-thio-alpha-D-ribose 1-phosphate: step 1/6. Catalyzes the interconversion of methylthioribose-1-phosphate (MTR-1-P) into methylthioribulose-1-phosphate (MTRu-1-P). The chain is Methylthioribose-1-phosphate isomerase (mri1) from Xenopus laevis (African clawed frog).